Reading from the N-terminus, the 342-residue chain is L-threonine 3-dehydrogenase (342 aa).

Cys-38 contacts Zn(2+). Residues Thr-40 and His-43 each act as charge relay system in the active site. Residues His-63, Glu-64, Cys-93, Cys-96, Cys-99, and Cys-107 each coordinate Zn(2+). NAD(+) is bound by residues Ile-175, Asp-195, Arg-200, 262–264 (LGI), and 286–287 (IY).

The protein belongs to the zinc-containing alcohol dehydrogenase family. In terms of assembly, homotetramer. Zn(2+) serves as cofactor.

Its subcellular location is the cytoplasm. The catalysed reaction is L-threonine + NAD(+) = (2S)-2-amino-3-oxobutanoate + NADH + H(+). It functions in the pathway amino-acid degradation; L-threonine degradation via oxydo-reductase pathway; glycine from L-threonine: step 1/2. In terms of biological role, catalyzes the NAD(+)-dependent oxidation of L-threonine to 2-amino-3-ketobutyrate. This chain is L-threonine 3-dehydrogenase, found in Aeromonas salmonicida (strain A449).